A 755-amino-acid chain; its full sequence is Tryptophan 2-monooxygenase (755 aa).

The FMN site is built by serine 247, glutamate 267, lysine 275, and arginine 295. A substrate-binding site is contributed by arginine 295.

This sequence belongs to the tryptophan 2-monooxygenase family. Requires FMN as cofactor.

The enzyme catalyses L-tryptophan + O2 = indole-3-acetamide + CO2 + H2O. It participates in plant hormone metabolism; auxin biosynthesis. This chain is Tryptophan 2-monooxygenase (tms1), found in Rhizobium radiobacter (Agrobacterium tumefaciens).